Here is a 322-residue protein sequence, read N- to C-terminus: AA9 family lytic polysaccharide monooxygenase B (322 aa).

An N-terminal signal peptide occupies residues 1–17 (MFSKSIIAASLLTAVTA). Residue H18 coordinates Cu(2+). 2 N-linked (GlcNAc...) asparagine glycosylation sites follow: N53 and N68. C56 and C173 are joined by a disulfide. H87 is a binding site for Cu(2+). N121 and N133 each carry an N-linked (GlcNAc...) asparagine glycan. Residues H159 and Q168 each coordinate O2. Position 170 (Y170) interacts with Cu(2+). N-linked (GlcNAc...) asparagine glycosylation is present at N197.

It belongs to the polysaccharide monooxygenase AA9 family. It depends on Cu(2+) as a cofactor.

Its subcellular location is the secreted. The enzyme catalyses [(1-&gt;4)-beta-D-glucosyl]n+m + reduced acceptor + O2 = 4-dehydro-beta-D-glucosyl-[(1-&gt;4)-beta-D-glucosyl]n-1 + [(1-&gt;4)-beta-D-glucosyl]m + acceptor + H2O.. Lytic polysaccharide monooxygenase (LPMO) that depolymerizes crystalline and amorphous polysaccharides via the oxidation of scissile alpha- or beta-(1-4)-glycosidic bonds, yielding C1 and C4 oxidation products. Catalysis by LPMOs requires the reduction of the active-site copper from Cu(II) to Cu(I) by a reducing agent and H(2)O(2) or O(2) as a cosubstrate. The sequence is that of AA9 family lytic polysaccharide monooxygenase B from Botryotinia fuckeliana (strain B05.10) (Noble rot fungus).